Reading from the N-terminus, the 334-residue chain is Ribosomal RNA small subunit methyltransferase H (334 aa).

Residues 34–36 (GGY), Asp-52, Ala-87, Asp-100, and Gln-107 contribute to the S-adenosyl-L-methionine site.

Belongs to the methyltransferase superfamily. RsmH family.

It localises to the cytoplasm. The catalysed reaction is cytidine(1402) in 16S rRNA + S-adenosyl-L-methionine = N(4)-methylcytidine(1402) in 16S rRNA + S-adenosyl-L-homocysteine + H(+). Functionally, specifically methylates the N4 position of cytidine in position 1402 (C1402) of 16S rRNA. This is Ribosomal RNA small subunit methyltransferase H from Maricaulis maris (strain MCS10) (Caulobacter maris).